Reading from the N-terminus, the 71-residue chain is Protein DP71L (71 aa).

2 important for host CHOP inhibition regions span residues 16–18 (VRF) and 57–61 (LSTVL).

This sequence belongs to the asfivirus DP71L family. Interacts (via C-terminus) with host PPP1CB.

In terms of biological role, interacts with the host phosphatase PP1 catalytic subunit (PPP1CB) and recruits it to dephosphorylate EIF2S1/eIF2alpha and therefore restores the host translation that has been shut-down by the host. Also inhibits the EIF2S1/eIF2alpha-ATF4-DDIT3/CHOP pathway. This is Protein DP71L from African swine fever virus (strain Badajoz 1971 Vero-adapted) (Ba71V).